A 463-amino-acid polypeptide reads, in one-letter code: A-type ATP synthase subunit B (463 aa).

Belongs to the ATPase alpha/beta chains family. In terms of assembly, has multiple subunits with at least A(3), B(3), C, D, E, F, H, I and proteolipid K(x).

The protein resides in the cell membrane. Functionally, component of the A-type ATP synthase that produces ATP from ADP in the presence of a proton gradient across the membrane. The B chain is a regulatory subunit. The chain is A-type ATP synthase subunit B from Thermococcus sp. (strain KI).